Here is a 258-residue protein sequence, read N- to C-terminus: Imidazole glycerol phosphate synthase subunit HisF (258 aa).

Residues Asp-11 and Asp-130 contribute to the active site.

The protein belongs to the HisA/HisF family. In terms of assembly, heterodimer of HisH and HisF.

Its subcellular location is the cytoplasm. It carries out the reaction 5-[(5-phospho-1-deoxy-D-ribulos-1-ylimino)methylamino]-1-(5-phospho-beta-D-ribosyl)imidazole-4-carboxamide + L-glutamine = D-erythro-1-(imidazol-4-yl)glycerol 3-phosphate + 5-amino-1-(5-phospho-beta-D-ribosyl)imidazole-4-carboxamide + L-glutamate + H(+). The protein operates within amino-acid biosynthesis; L-histidine biosynthesis; L-histidine from 5-phospho-alpha-D-ribose 1-diphosphate: step 5/9. Its function is as follows. IGPS catalyzes the conversion of PRFAR and glutamine to IGP, AICAR and glutamate. The HisF subunit catalyzes the cyclization activity that produces IGP and AICAR from PRFAR using the ammonia provided by the HisH subunit. This Yersinia pestis (strain Pestoides F) protein is Imidazole glycerol phosphate synthase subunit HisF.